Reading from the N-terminus, the 317-residue chain is Regulator of microtubule dynamics protein 1 (317 aa).

Residue Lys-168 is modified to N6-succinyllysine. TPR repeat units lie at residues 171 to 207 and 225 to 261; these read AICI…NPKD and PWYQ…DPNF.

Belongs to the RMDN family. In terms of assembly, interacts with microtubules.

It localises to the cytoplasm. The protein localises to the cytoskeleton. Its subcellular location is the spindle. It is found in the spindle pole. The polypeptide is Regulator of microtubule dynamics protein 1 (RMDN1) (Bos taurus (Bovine)).